A 343-amino-acid chain; its full sequence is 2-alkenal reductase (NADP(+)-dependent) (343 aa).

Substrate-binding residues include Y55 and Y80. Residues 165–166 (AV), G186, K190, Y206, N230, C252, Y258, 282–284 (FLV), and N332 contribute to the NADP(+) site.

Belongs to the NADP-dependent oxidoreductase L4BD family. As to quaternary structure, homodimer.

The catalysed reaction is an n-alkanal + NADP(+) = an alk-2-enal + NADPH + H(+). Its function is as follows. Reduces the C=C double bonds of alpha, beta unsaturated enones, but has no activity on enones with an endocyclic C=C double-bond. Shows a high specificity for NADPH as the hybrid donor. Substrates are 1-nitrocyclohexene, 2-methylpentenal, trans-cinnamaldehyde, methyl-trans-2-methylcinnamaldehyde, trans-2-nonenal and 1-octen-3-one. Reduced activity with aplha-methyl transcinnamaldehyde, 1-cyclohexene-1-carboxaldehyde, methyl crotonate, (R)-pulegone, and dimethyl itaconate and no activity with maleimides, citral, (5R)- or (5S)-carvone, (S)-perillyl alcohol, and substituted cyclohexenones and cyclopentenones. May also act as a allyl-alcohol dehydrogenase by catalyzing the dehydrogenation of secondary allylic alcohols rather than saturated secondary alcohols. Allyl-alcohol dehydrogenase is specific for the S-stereoisomer of the alcohols. The polypeptide is 2-alkenal reductase (NADP(+)-dependent) (DBR) (Nicotiana tabacum (Common tobacco)).